The chain runs to 968 residues: Glycine dehydrogenase (decarboxylating) (968 aa).

Position 717 is an N6-(pyridoxal phosphate)lysine (lysine 717).

Belongs to the GcvP family. As to quaternary structure, the glycine cleavage system is composed of four proteins: P, T, L and H. Requires pyridoxal 5'-phosphate as cofactor.

The catalysed reaction is N(6)-[(R)-lipoyl]-L-lysyl-[glycine-cleavage complex H protein] + glycine + H(+) = N(6)-[(R)-S(8)-aminomethyldihydrolipoyl]-L-lysyl-[glycine-cleavage complex H protein] + CO2. In terms of biological role, the glycine cleavage system catalyzes the degradation of glycine. The P protein binds the alpha-amino group of glycine through its pyridoxal phosphate cofactor; CO(2) is released and the remaining methylamine moiety is then transferred to the lipoamide cofactor of the H protein. The sequence is that of Glycine dehydrogenase (decarboxylating) from Tropheryma whipplei (strain TW08/27) (Whipple's bacillus).